Here is a 198-residue protein sequence, read N- to C-terminus: FMN-dependent NADH:quinone oxidoreductase (198 aa).

92–95 provides a ligand contact to FMN; the sequence is MWNL.

Belongs to the azoreductase type 1 family. As to quaternary structure, homodimer. It depends on FMN as a cofactor.

It catalyses the reaction 2 a quinone + NADH + H(+) = 2 a 1,4-benzosemiquinone + NAD(+). The catalysed reaction is N,N-dimethyl-1,4-phenylenediamine + anthranilate + 2 NAD(+) = 2-(4-dimethylaminophenyl)diazenylbenzoate + 2 NADH + 2 H(+). In terms of biological role, quinone reductase that provides resistance to thiol-specific stress caused by electrophilic quinones. Functionally, also exhibits azoreductase activity. Catalyzes the reductive cleavage of the azo bond in aromatic azo compounds to the corresponding amines. The polypeptide is FMN-dependent NADH:quinone oxidoreductase (Lachnoclostridium phytofermentans (strain ATCC 700394 / DSM 18823 / ISDg) (Clostridium phytofermentans)).